Reading from the N-terminus, the 877-residue chain is Alanine--tRNA ligase (877 aa).

Residues His-566, His-570, Cys-668, and His-672 each coordinate Zn(2+).

Belongs to the class-II aminoacyl-tRNA synthetase family. Zn(2+) is required as a cofactor.

It localises to the cytoplasm. The enzyme catalyses tRNA(Ala) + L-alanine + ATP = L-alanyl-tRNA(Ala) + AMP + diphosphate. Catalyzes the attachment of alanine to tRNA(Ala) in a two-step reaction: alanine is first activated by ATP to form Ala-AMP and then transferred to the acceptor end of tRNA(Ala). Also edits incorrectly charged Ser-tRNA(Ala) and Gly-tRNA(Ala) via its editing domain. In Staphylococcus aureus (strain USA300 / TCH1516), this protein is Alanine--tRNA ligase.